The following is a 230-amino-acid chain: Large ribosomal subunit protein uL1 (230 aa).

It belongs to the universal ribosomal protein uL1 family. As to quaternary structure, part of the 50S ribosomal subunit.

Its function is as follows. Binds directly to 23S rRNA. The L1 stalk is quite mobile in the ribosome, and is involved in E site tRNA release. Functionally, protein L1 is also a translational repressor protein, it controls the translation of the L11 operon by binding to its mRNA. The chain is Large ribosomal subunit protein uL1 from Rhodopseudomonas palustris (strain BisB18).